We begin with the raw amino-acid sequence, 183 residues long: Protein vem-1 (183 aa).

Residues 9–29 (FTMYDAVFLVVVLGFFFYWLT) traverse the membrane as a helical segment. Residues 47–146 (MSDMTVEELR…FKYLTVGRLV (100 aa)) form the Cytochrome b5 heme-binding domain.

It belongs to the cytochrome b5 family. MAPR subfamily. In terms of assembly, interacts with unc-40 (via cytoplasmic domain). In terms of tissue distribution, expressed in the AVG pioneer midline neuron and in several nerve ring neurons that extend projecting axons into the right ventral nerve cord.

Its subcellular location is the membrane. It localises to the cell projection. The protein resides in the axon. Functionally, transmembrane protein required for the axon guidance of a subset of ventral nerve cord-associated interneurons and motor neurons. May function with the netrin receptor unc-40 in axon guidance. This chain is Protein vem-1, found in Caenorhabditis elegans.